We begin with the raw amino-acid sequence, 85 residues long: Exodeoxyribonuclease 7 small subunit (85 aa).

The protein belongs to the XseB family. In terms of assembly, heterooligomer composed of large and small subunits.

It localises to the cytoplasm. The catalysed reaction is Exonucleolytic cleavage in either 5'- to 3'- or 3'- to 5'-direction to yield nucleoside 5'-phosphates.. Functionally, bidirectionally degrades single-stranded DNA into large acid-insoluble oligonucleotides, which are then degraded further into small acid-soluble oligonucleotides. This chain is Exodeoxyribonuclease 7 small subunit, found in Mycobacterium bovis (strain ATCC BAA-935 / AF2122/97).